A 593-amino-acid polypeptide reads, in one-letter code: DNA primase (593 aa).

The segment at 38–62 (CPFHQEKTPSFTVSDSKRFFYCFGC) adopts a CHC2-type zinc-finger fold. Residues 250–332 (NRSILVEGYF…EKKISFIRLP (83 aa)) form the Toprim domain. E256, D300, and D302 together coordinate Mg(2+).

It belongs to the DnaG primase family. In terms of assembly, monomer. Interacts with DnaB. It depends on Zn(2+) as a cofactor. Requires Mg(2+) as cofactor.

The catalysed reaction is ssDNA + n NTP = ssDNA/pppN(pN)n-1 hybrid + (n-1) diphosphate.. RNA polymerase that catalyzes the synthesis of short RNA molecules used as primers for DNA polymerase during DNA replication. This Rickettsia typhi (strain ATCC VR-144 / Wilmington) protein is DNA primase.